The sequence spans 84 residues: Gas vesicle protein M1 (84 aa).

An interacts with GvpL1 region spans residues 1-25 (MEPTKDETHAIVEFVDVLLRDGAVI). The segment at 5–21 (KDETHAIVEFVDVLLRD) is alpha helix 1. 2 beta-strand regions span residues 27-29 (ADV) and 41-43 (ISL). The short motif at 44–48 (RAAIA) is the Conserved in GvpJ1/2 but not GvpA element. Alpha helix regions lie at residues 46-56 (AIAGMTTMTEY) and 62-84 (WDAA…RRED).

Belongs to the gas vesicle GvpA family. GvpF to GvpM interact with each other in vitro, and may form multi-subunit complex(es). Might interact with GvpA1.

It localises to the gas vesicle. In terms of biological role, proteins GvpF to GvpM might be involved in nucleating gas vesicle formation. A minor component of the gas vesicle. Gas vesicles are hollow, gas filled proteinaceous nanostructures found in several microbial planktonic microorganisms. They allow positioning of halobacteria at the optimal depth for growth in the poorly aerated, shallow brine pools of their habitat. Its function is as follows. Expression of a 9.5 kb p-vac DNA fragment containing 2 divergently transcribed regions (gvpD-gvpE-gvpF-gvpG-gvpH-gvpI-gvpJ-gvpK-gvpL-gvpM and gvpA-gvpC-gvpN-gvpO) allows H.volcanii to produce gas vesicles. All site-directed mutagenesis is tested in H.volcanii. A minimal gas vesicle can be made in H.volcanii by gvpA1-gvpO1 plus gvpF1-gvpG1-gvpJ1-gvpK1-gvpL1-gvpM1; lack of enough GvpJ1 prevents formation. A similar region restores gas vesicle production in H.halobium without the p-vac locus, but it still has the c-vac locus. The protein is Gas vesicle protein M1 (gvpM11) of Halobacterium salinarum (strain ATCC 700922 / JCM 11081 / NRC-1) (Halobacterium halobium).